Here is a 109-residue protein sequence, read N- to C-terminus: Large ribosomal subunit protein uL23 (109 aa).

Belongs to the universal ribosomal protein uL23 family. As to quaternary structure, part of the 50S ribosomal subunit. Contacts protein L29, and trigger factor when it is bound to the ribosome.

One of the early assembly proteins it binds 23S rRNA. One of the proteins that surrounds the polypeptide exit tunnel on the outside of the ribosome. Forms the main docking site for trigger factor binding to the ribosome. This Chlorobium phaeobacteroides (strain BS1) protein is Large ribosomal subunit protein uL23.